The primary structure comprises 221 residues: Phosphoglycolate phosphatase (221 aa).

Asp-10 (nucleophile) is an active-site residue. Asp-10, Asp-12, and Asp-168 together coordinate Mg(2+).

The protein belongs to the HAD-like hydrolase superfamily. CbbY/CbbZ/Gph/YieH family. The cofactor is Mg(2+).

The enzyme catalyses 2-phosphoglycolate + H2O = glycolate + phosphate. Its pathway is organic acid metabolism; glycolate biosynthesis; glycolate from 2-phosphoglycolate: step 1/1. Its function is as follows. Specifically catalyzes the dephosphorylation of 2-phosphoglycolate. Is involved in the dissimilation of the intracellular 2-phosphoglycolate formed during the DNA repair of 3'-phosphoglycolate ends, a major class of DNA lesions induced by oxidative stress. This is Phosphoglycolate phosphatase from Xanthomonas campestris pv. campestris (strain 8004).